A 69-amino-acid chain; its full sequence is Sec-independent protein translocase protein TatA (69 aa).

A helical transmembrane segment spans residues 1–21; the sequence is MFGLGGQELILILLIILLLFG.

This sequence belongs to the TatA/E family. Forms a complex with TatC.

It is found in the cell inner membrane. Its function is as follows. Part of the twin-arginine translocation (Tat) system that transports large folded proteins containing a characteristic twin-arginine motif in their signal peptide across membranes. TatA could form the protein-conducting channel of the Tat system. The polypeptide is Sec-independent protein translocase protein TatA (Chlorobium phaeovibrioides (strain DSM 265 / 1930) (Prosthecochloris vibrioformis (strain DSM 265))).